The following is a 218-amino-acid chain: MMP 1-O-methyltransferase (218 aa).

Residues Phe-20, Gly-46, Ser-52, Asp-71, Gly-75, and Ser-124 each coordinate S-adenosyl-L-methionine. Asp-141 serves as a coordination point for Mg(2+). His-144 serves as the catalytic Proton acceptor. Arg-151 lines the S-adenosyl-L-methionine pocket. Mg(2+) is bound by residues His-169 and Asp-170.

It belongs to the methyltransferase superfamily. As to quaternary structure, homodimer. Mg(2+) serves as cofactor.

It carries out the reaction 3,3'-di-O-methyl-4alpha-mannobiose + S-adenosyl-L-methionine = 1,3,3'-tri-O-methyl-4alpha-mannobiose + S-adenosyl-L-homocysteine + H(+). Inhibited by EDTA. Functionally, involved in the biosynthesis of 3-O-methylmannose polysaccharides (MMP), which are intracellular polymethylated polysaccharides implicated in the modulation of fatty acid metabolism in non-tuberculous mycobacteria. Specifically methylates the 1-OH position of 3,3'-di-O-methyl-4alpha-mannobiose, a probable early precursor of MMP, yielding the reducing end dimannoside of MMP. This chain is MMP 1-O-methyltransferase, found in Mycolicibacterium hassiacum (strain DSM 44199 / CIP 105218 / JCM 12690 / 3849) (Mycobacterium hassiacum).